We begin with the raw amino-acid sequence, 201 residues long: Probable nicotinate-nucleotide adenylyltransferase (201 aa).

It belongs to the NadD family.

The enzyme catalyses nicotinate beta-D-ribonucleotide + ATP + H(+) = deamido-NAD(+) + diphosphate. Its pathway is cofactor biosynthesis; NAD(+) biosynthesis; deamido-NAD(+) from nicotinate D-ribonucleotide: step 1/1. In terms of biological role, catalyzes the reversible adenylation of nicotinate mononucleotide (NaMN) to nicotinic acid adenine dinucleotide (NaAD). The chain is Probable nicotinate-nucleotide adenylyltransferase from Clostridium botulinum (strain Langeland / NCTC 10281 / Type F).